Consider the following 225-residue polypeptide: Prepilin leader peptidase/N-methyltransferase (225 aa).

Topologically, residues 1–2 (MT) are periplasmic. The chain crosses the membrane as a helical span at residues 3–23 (MLLPLFILVGFIADYFVNAIA). The Cytoplasmic segment spans residues 24–67 (YHLSPLEDKTALTFRQVLVHFRQKKYAWHDTVPLILCVAAAIAC). The helical transmembrane segment at 68–88 (ALAPFTPIVTGALFLYFCFVL) threads the bilayer. Residues 89–103 (TLSVIDFRTQLLPDK) are Periplasmic-facing. The chain crosses the membrane as a helical span at residues 104-124 (LTLPLLWLGLVFNAQYGLIDL). Over 125-127 (HDA) the chain is Cytoplasmic. A helical membrane pass occupies residues 128–148 (VYGAVAGYGVLWCVYWGVWLV). Residues 149-174 (CHKEGLGYGDFKLLAAAGAWCGWQTL) are Periplasmic-facing. Residues 175 to 195 (PMILLIASLGGIGYAIVSQLL) traverse the membrane as a helical segment. The Cytoplasmic segment spans residues 196 to 202 (QRRTITT). Residues 203–223 (IAFGPWLALGSMINLGYLAWI) form a helical membrane-spanning segment. Residues 224 to 225 (SY) are Periplasmic-facing.

The protein belongs to the peptidase A24 family.

The protein localises to the cell inner membrane. It carries out the reaction Typically cleaves a -Gly-|-Phe- bond to release an N-terminal, basic peptide of 5-8 residues from type IV prepilin, and then N-methylates the new N-terminal amino group, the methyl donor being S-adenosyl-L-methionine.. Its function is as follows. Plays a role in type II pseudopili formation by proteolytically removing the leader sequence from substrate proteins and subsequently monomethylating the alpha-amino group of the newly exposed N-terminal phenylalanine. Substrates include proteins required for biogenesis of the type II general secretory apparatus. The protein is Prepilin leader peptidase/N-methyltransferase (gspO) of Escherichia coli (strain K12).